The following is a 250-amino-acid chain: 3-deoxy-manno-octulosonate cytidylyltransferase (250 aa).

It belongs to the KdsB family.

It localises to the cytoplasm. The catalysed reaction is 3-deoxy-alpha-D-manno-oct-2-ulosonate + CTP = CMP-3-deoxy-beta-D-manno-octulosonate + diphosphate. Its pathway is nucleotide-sugar biosynthesis; CMP-3-deoxy-D-manno-octulosonate biosynthesis; CMP-3-deoxy-D-manno-octulosonate from 3-deoxy-D-manno-octulosonate and CTP: step 1/1. It functions in the pathway bacterial outer membrane biogenesis; lipopolysaccharide biosynthesis. Functionally, activates KDO (a required 8-carbon sugar) for incorporation into bacterial lipopolysaccharide in Gram-negative bacteria. The sequence is that of 3-deoxy-manno-octulosonate cytidylyltransferase from Geobacter sulfurreducens (strain ATCC 51573 / DSM 12127 / PCA).